Reading from the N-terminus, the 3616-residue chain is Replicase polyprotein 1ab (3616 aa).

The C4-type; atypical zinc-finger motif lies at 8–28 (CLCTPNARVFWEHGQVYCTRC). Positions 69–181 (ECRPGGLCWL…KGLCPFSDAR (113 aa)) constitute a Peptidase C31 domain. Catalysis depends on for Nsp1-alpha papain-like cysteine proteinase activity residues Cys-76 and His-147. One can recognise a Peptidase C32 domain in the interval 262 to 381 (NDTKFSKCWE…FRFQTRKYYG (120 aa)). Active-site for Nsp1-beta papain-like cysteine proteinase activity residues include Cys-269 and His-340. Residues 381–486 (GYSPPGDGAC…RGVCGGECKF (106 aa)) enclose the Peptidase C33 domain. Residues Cys-390 and His-456 each act as for Nsp2 cysteine proteinase activity in the active site. Disordered regions lie at residues 672–706 (SRAL…REVP) and 883–912 (PLKS…GAPR). The span at 676 to 690 (KSAKPKRKRNKKKKT) shows a compositional bias: basic residues. The span at 903–912 (DQLSQDGAPR) shows a compositional bias: polar residues. 9 consecutive transmembrane segments (helical) span residues 942-962 (WLNH…SVVL), 977-997 (LFCL…FIPL), 1010-1030 (LSVF…VLPE), 1060-1080 (HIGV…VGGP), 1085-1105 (FYFL…AVAL), 1289-1309 (VADF…SAWL), 1364-1384 (ALMI…SLLV), 1386-1406 (VICV…VIAF), and 1425-1445 (VQFF…VILI). The segment at 981 to 1105 (CCVLLCFHFP…LGLVFLAVAL (125 aa)) is HD1. Residues 1289-1448 (VADFVCLGLY…AVAVILISSW (160 aa)) form an HD2 region. A Peptidase S32 domain is found at 1513-1714 (GSLRTRGCAK…AVVESLPTPE (202 aa)). Active-site charge relay system; for 3C-like serine proteinase activity residues include His-1551, Asp-1576, and Ser-1628. Helical transmembrane passes span 1715 to 1735 (GALS…LIHV), 1737 to 1757 (FVPV…VVLA), 1761 to 1781 (FSFA…VLLL), and 1832 to 1852 (SKEI…LSLF). The segment at 1737 to 1852 (FVPVIAVAFF…HVLALLLSLF (116 aa)) is HD3. One can recognise a NiRAN domain in the interval 2194 to 2352 (SLNGLQQSSA…LPYKLHPVRG (159 aa)). The RdRp catalytic domain occupies 2590-2724 (GRCLEADLAS…YNESDELPNY (135 aa)). In terms of domain architecture, AV ZBD spans 2844–2907 (KKKCRTCAHC…SSAMNLNTEL (64 aa)). 12 residues coordinate Zn(2+): Cys-2850, Cys-2853, Cys-2863, Cys-2868, His-2871, His-2873, His-2875, His-2877, Cys-2884, His-2886, Cys-2893, and Cys-2896. In terms of domain architecture, (+)RNA virus helicase ATP-binding spans 2964-3116 (QVMKVAQTCA…AFSLMPGRQL (153 aa)). Residue 2992–2999 (GAPGTGKT) participates in ATP binding. In terms of domain architecture, (+)RNA virus helicase C-terminal spans 3117–3248 (IEVFRFGPAV…CGDQPKMIVG (132 aa)). The AV-Nsp11N/CoV-Nsp15M domain maps to 3272 to 3368 (EGTASPLPQV…LTKYLKGESV (97 aa)). Positions 3370–3492 (LPDSIMSTGR…MVWKDATAYF (123 aa)) constitute a NendoU domain.

Belongs to the arteriviridae polyprotein family. In terms of processing, specific enzymatic cleavages in vivo by its own proteases yield mature proteins. There are two alternative pathways for processing. Either nsp4-5 is cleaved, which represents the major pathway or the nsp5-6 and nsp6-7 are processed, which represents the minor pathway. The major pathway occurs when nsp2 acts as a cofactor for nsp4.

The protein localises to the host membrane. The protein resides in the host cytoplasm. Its subcellular location is the host perinuclear region. It catalyses the reaction RNA(n) + a ribonucleoside 5'-triphosphate = RNA(n+1) + diphosphate. The catalysed reaction is ATP + H2O = ADP + phosphate + H(+). It carries out the reaction uridylyl-uridylyl-ribonucleotide-RNA = a 3'-end uridylyl-2',3'-cyclophospho-uridine-RNA + a 5'-end dephospho-ribonucleoside-RNA. In terms of biological role, the replicase polyprotein 1ab is a multifunctional protein: it contains the activities necessary for the transcription of negative stranded RNA, leader RNA, subgenomic mRNAs and progeny virion RNA as well as proteinases responsible for the cleavage of the polyprotein into functional products. The Nsp1 chain is essential for viral subgenomic mRNA synthesis. Functionally, the 3C-like serine proteinase chain is responsible for the majority of cleavages as it cleaves the C-terminus of the polyprotein. Its function is as follows. The helicase chain, which contains a zinc finger structure, displays RNA and DNA duplex-unwinding activities with 5' to 3' polarity. In terms of biological role, plays a role in viral transcription/replication and prevents the simultaneous activation of host cell dsRNA sensors, such as MDA5/IFIH1, OAS, and PKR. Acts by degrading the 5'-polyuridines generated during replication of the poly(A) region of viral genomic and subgenomic RNAs. Catalyzes a two-step reaction in which a 2'3'-cyclic phosphate (2'3'-cP) is first generated by 2'-O transesterification, which is then hydrolyzed to a 3'-phosphate (3'-P). If not degraded, poly(U) RNA would hybridize with poly(A) RNA tails and activate host dsRNA sensors. This is Replicase polyprotein 1ab (rep) from Mus musculus domesticus (western European house mouse).